The chain runs to 149 residues: Hordoindoline-A (149 aa).

Positions Met-1–Ala-19 are cleaved as a signal peptide. A propeptide spanning residues Gln-20–Tyr-28 is cleaved from the precursor. The propeptide at Tyr-148–Trp-149 is removed in mature form.

Post-translationally, five disulfide bonds are present. As to expression, found in endosperm and aleurone layer of developing kernels, but not in the embryo.

Its subcellular location is the membrane. It is found in the secreted. It localises to the extracellular space. Its function is as follows. Acts as a membranotoxin, probably through its antibacterial and antifungal activities, contributing to the defense mechanism of the plant against predators. Forms monovalent cation-selective ion channels in membranes. Contributes to grain texture and hardness. This is Hordoindoline-A (HINA) from Hordeum vulgare (Barley).